We begin with the raw amino-acid sequence, 568 residues long: Envelope glycoprotein E (568 aa).

The signal sequence occupies residues methionine 1–alanine 20. Residues glutamine 21–arginine 422 lie on the Virion surface side of the membrane. N-linked (GlcNAc...) asparagine; by host glycosylation is found at asparagine 88, asparagine 179, and asparagine 248. An intrachain disulfide couples cysteine 271 to cysteine 280. Residues alanine 423–glycine 443 traverse the membrane as a helical segment. Over alanine 444–tyrosine 568 the chain is Intravirion. Positions lysine 465 to leucine 468 match the Internalization motif motif. The interval threonine 470–leucine 534 is disordered. Residues glycine 482–glutamate 497 form an acidic region. The segment covering leucine 486 to leucine 500 has biased composition (acidic residues). The span at lysine 515 to arginine 526 shows a compositional bias: basic residues.

The protein belongs to the alphaherpesvirinae glycoprotein E family. As to quaternary structure, interacts with gI. Post-translationally, phosphorylated on serines within the acidic cluster. Phosphorylation determines whether endocytosed viral gE traffics to the trans-Golgi network or recycles to the cell membrane.

It localises to the virion membrane. Its subcellular location is the host cell membrane. It is found in the host cell junction. The protein resides in the host Golgi apparatus membrane. The protein localises to the host endosome membrane. In terms of biological role, in epithelial cells, the heterodimer gE/gI is required for the cell-to-cell spread of the virus, by sorting nascent virions to cell junctions. Once the virus reaches the cell junctions, virus particles can spread to adjacent cells extremely rapidly through interactions with cellular receptors that accumulate at these junctions. Implicated in basolateral spread in polarized cells. In neuronal cells, gE/gI is essential for the anterograde spread of the infection throughout the host nervous system. Together with US9, the heterodimer gE/gI is involved in the sorting and transport of viral structural components toward axon tips. This chain is Envelope glycoprotein E (US8), found in Psittacid herpesvirus 1 (isolate Amazon parrot/-/97-0001/1997) (PsHV-1).